The primary structure comprises 297 residues: GTPase Era (297 aa).

The Era-type G domain occupies 7 to 174 (RSGFVSIIGR…VEVVHGFIPA (168 aa)). The segment at 15 to 22 (GRPNVGKS) is G1. 15–22 (GRPNVGKS) serves as a coordination point for GTP. The G2 stretch occupies residues 41–45 (QTTRN). Positions 62–65 (DTPG) are G3. GTP-binding positions include 62-66 (DTPGI) and 124-127 (NKID). The segment at 124-127 (NKID) is G4. Positions 153 to 155 (VSA) are G5. The region spanning 205–282 (THDEVPYSVA…FLELFVRVSK (78 aa)) is the KH type-2 domain.

It belongs to the TRAFAC class TrmE-Era-EngA-EngB-Septin-like GTPase superfamily. Era GTPase family. In terms of assembly, monomer.

Its subcellular location is the cytoplasm. It localises to the cell inner membrane. Its function is as follows. An essential GTPase that binds both GDP and GTP, with rapid nucleotide exchange. Plays a role in 16S rRNA processing and 30S ribosomal subunit biogenesis and possibly also in cell cycle regulation and energy metabolism. This chain is GTPase Era, found in Geotalea uraniireducens (strain Rf4) (Geobacter uraniireducens).